The following is a 164-amino-acid chain: ATP synthase subunit b (164 aa).

The chain crosses the membrane as a helical span at residues 8-28 (FGIIFWQTITLLFVLFILGKF).

Belongs to the ATPase B chain family. As to quaternary structure, F-type ATPases have 2 components, F(1) - the catalytic core - and F(0) - the membrane proton channel. F(1) has five subunits: alpha(3), beta(3), gamma(1), delta(1), epsilon(1). F(0) has three main subunits: a(1), b(2) and c(10-14). The alpha and beta chains form an alternating ring which encloses part of the gamma chain. F(1) is attached to F(0) by a central stalk formed by the gamma and epsilon chains, while a peripheral stalk is formed by the delta and b chains.

It localises to the cell membrane. F(1)F(0) ATP synthase produces ATP from ADP in the presence of a proton or sodium gradient. F-type ATPases consist of two structural domains, F(1) containing the extramembraneous catalytic core and F(0) containing the membrane proton channel, linked together by a central stalk and a peripheral stalk. During catalysis, ATP synthesis in the catalytic domain of F(1) is coupled via a rotary mechanism of the central stalk subunits to proton translocation. Functionally, component of the F(0) channel, it forms part of the peripheral stalk, linking F(1) to F(0). The protein is ATP synthase subunit b of Amoebophilus asiaticus (strain 5a2).